The sequence spans 623 residues: DNA mismatch repair protein MutL (623 aa).

The span at 353–368 (AQQSAPRPANSYSPAS) shows a compositional bias: polar residues. Residues 353-389 (AQQSAPRPANSYSPASWRTAPPAPRSEWSPQTAHPAH) form a disordered region.

It belongs to the DNA mismatch repair MutL/HexB family.

Its function is as follows. This protein is involved in the repair of mismatches in DNA. It is required for dam-dependent methyl-directed DNA mismatch repair. May act as a 'molecular matchmaker', a protein that promotes the formation of a stable complex between two or more DNA-binding proteins in an ATP-dependent manner without itself being part of a final effector complex. The protein is DNA mismatch repair protein MutL of Brucella melitensis biotype 1 (strain ATCC 23456 / CCUG 17765 / NCTC 10094 / 16M).